A 1319-amino-acid chain; its full sequence is Son of sevenless homolog 1 (1319 aa).

The DH domain occupies 200–390 (TYYDLVKAFM…LNVQSGMEKI (191 aa)). The region spanning 444 to 548 (FIMEGTLTRV…AALISLQYRS (105 aa)) is the PH domain. An N-terminal Ras-GEF domain is found at 597-741 (GIPIIKAGTV…SITKIIQRKK (145 aa)). Residues 780 to 1019 (HPIEIARQLT…FNKSLEIEPR (240 aa)) form the Ras-GEF domain. The segment at 1019 to 1101 (RHPKPLPRFP…ASGTSSNTDV (83 aa)) is disordered. A phosphoserine mark is found at serine 1078 and serine 1082. Serine 1120 and serine 1147 each carry phosphoserine; by RPS6KA3. The interval 1121-1319 (VSSISLSKGT…PPLLENAHSS (199 aa)) is disordered. 3 positions are modified to phosphoserine: serine 1164, serine 1196, and serine 1215. Pro residues predominate over residues 1194–1203 (PESPPLLPPR). The segment covering 1238 to 1250 (SPSPFTPPPPQTP) has biased composition (pro residues). The residue at position 1261 (serine 1261) is a Phosphoserine. The segment covering 1296–1309 (YKREHTHPSMHRDG) has biased composition (basic and acidic residues).

Interacts (via C-terminus) with GRB2 (via SH3 domain). Forms a complex with phosphorylated MUC1 and GRB2 (via its SH3 domains). Interacts with phosphorylated LAT2. Interacts with NCK1 and NCK2. Part of a complex consisting of ABI1, EPS8 and SOS1. Interacts (Ser-1120 and Ser-1147 phosphorylated form) with YWHAB and YWHAE. In terms of processing, phosphorylation at Ser-1120 and Ser-1147 by RPS6KA3 create YWHAB and YWHAE binding sites and which contribute to the negative regulation of EGF-induced MAPK1/3 phosphorylation. In terms of tissue distribution, expressed in most embryonic and adult tissues.

Its function is as follows. Promotes the exchange of Ras-bound GDP by GTP. Probably by promoting Ras activation, regulates phosphorylation of MAP kinase MAPK3 in response to EGF. Catalytic component of a trimeric complex that participates in transduction of signals from Ras to Rac by promoting the Rac-specific guanine nucleotide exchange factor (GEF) activity. This is Son of sevenless homolog 1 (Sos1) from Mus musculus (Mouse).